A 309-amino-acid polypeptide reads, in one-letter code: Protein FdhE (309 aa).

Belongs to the FdhE family.

The protein resides in the cytoplasm. Necessary for formate dehydrogenase activity. The chain is Protein FdhE from Salmonella enteritidis PT4 (strain P125109).